The chain runs to 704 residues: Elongation factor G (704 aa).

In terms of domain architecture, tr-type G spans 8-290 (ARYRNIGISA…AVIDYLPSPV (283 aa)). GTP-binding positions include 17 to 24 (AHIDAGKT), 88 to 92 (DTPGH), and 142 to 145 (NKMD).

It belongs to the TRAFAC class translation factor GTPase superfamily. Classic translation factor GTPase family. EF-G/EF-2 subfamily.

The protein resides in the cytoplasm. Functionally, catalyzes the GTP-dependent ribosomal translocation step during translation elongation. During this step, the ribosome changes from the pre-translocational (PRE) to the post-translocational (POST) state as the newly formed A-site-bound peptidyl-tRNA and P-site-bound deacylated tRNA move to the P and E sites, respectively. Catalyzes the coordinated movement of the two tRNA molecules, the mRNA and conformational changes in the ribosome. The chain is Elongation factor G from Salmonella agona (strain SL483).